Here is a 268-residue protein sequence, read N- to C-terminus: Fibroblast growth factor 8 (268 aa).

The first 22 residues, 1-22 (MGSPRSALSCLLLHLLVLCLQA), serve as a signal peptide directing secretion. Pyrrolidone carboxylic acid is present on glutamine 23. Positions 29-87 (QKRGPGAGNPADTLGQGHEDRPFGQRSRAGKNFTNPAPNYPEEGSKEQRDSVLPKVTQR) are disordered. N-linked (GlcNAc...) asparagine glycosylation occurs at asparagine 60. Basic and acidic residues predominate over residues 71-80 (EGSKEQRDSV). N-linked (GlcNAc...) asparagine glycosylation is present at asparagine 190.

The protein belongs to the heparin-binding growth factors family. In terms of assembly, monomer. Homodimer. Interacts with FGFR1, FGFR2, FGFR3 and FGFR4. Affinity between fibroblast growth factors (FGFs) and their receptors is increased by heparan sulfate glycosaminoglycans that function as coreceptors. The N-terminus is blocked. Absent in normal mammary glands and detected only in adult testis and ovary and in midgestational embryos.

The protein resides in the secreted. Plays an important role in the regulation of embryonic development, cell proliferation, cell differentiation and cell migration. Required for normal brain, eye, ear and limb development during embryogenesis. Required for normal development of the gonadotropin-releasing hormone (GnRH) neuronal system. Plays a role in neurite outgrowth in hippocampal cells. Cooperates with Wnt-1 in mouse mammary tumor virus-induced murine mammary tumorigenesis. In Mus musculus (Mouse), this protein is Fibroblast growth factor 8 (Fgf8).